The following is a 263-amino-acid chain: Thiazole synthase (263 aa).

Residue lysine 100 is the Schiff-base intermediate with DXP of the active site. 1-deoxy-D-xylulose 5-phosphate contacts are provided by residues glycine 161, alanine 187–glycine 188, and asparagine 209–threonine 210.

The protein belongs to the ThiG family. Homotetramer. Forms heterodimers with either ThiH or ThiS.

The protein localises to the cytoplasm. It carries out the reaction [ThiS sulfur-carrier protein]-C-terminal-Gly-aminoethanethioate + 2-iminoacetate + 1-deoxy-D-xylulose 5-phosphate = [ThiS sulfur-carrier protein]-C-terminal Gly-Gly + 2-[(2R,5Z)-2-carboxy-4-methylthiazol-5(2H)-ylidene]ethyl phosphate + 2 H2O + H(+). The protein operates within cofactor biosynthesis; thiamine diphosphate biosynthesis. Catalyzes the rearrangement of 1-deoxy-D-xylulose 5-phosphate (DXP) to produce the thiazole phosphate moiety of thiamine. Sulfur is provided by the thiocarboxylate moiety of the carrier protein ThiS. In vitro, sulfur can be provided by H(2)S. The polypeptide is Thiazole synthase (Shouchella clausii (strain KSM-K16) (Alkalihalobacillus clausii)).